The chain runs to 456 residues: Cysteine synthase 2 (456 aa).

A helical transmembrane segment spans residues 9–29; the sequence is VYGTVALTAAFAAGILVTLGF.

The protein belongs to the cysteine synthase/cystathionine beta-synthase family. The cofactor is pyridoxal 5'-phosphate.

The protein resides in the mitochondrion outer membrane. The catalysed reaction is O-acetyl-L-serine + hydrogen sulfide = L-cysteine + acetate. In terms of biological role, putative cysteine synthase that catalyzes the conversion of O-acetyl-L-serine (OAS) into cysteine, the last step in the cysteine biosynthesis pathway. However, in contrast to cysteine synthase cys-17, this CS-like protein may not function in cysteine biosynthesis. The protein is Cysteine synthase 2 of Neurospora crassa (strain ATCC 24698 / 74-OR23-1A / CBS 708.71 / DSM 1257 / FGSC 987).